Consider the following 146-residue polypeptide: Hemoglobin subunit beta (146 aa).

In terms of domain architecture, Globin spans 2–146 (HWTAEEKQLI…VAHALARKYH (145 aa)). 2 residues coordinate heme b: His-63 and His-92.

The protein belongs to the globin family. Heterotetramer of two alpha chains and two beta chains. Red blood cells.

Functionally, involved in oxygen transport from the lung to the various peripheral tissues. The polypeptide is Hemoglobin subunit beta (HBB) (Ara ararauna (Blue-and-yellow macaw)).